A 382-amino-acid polypeptide reads, in one-letter code: MTMQAQLGDKTFTLERFPLDQKNRSLQAWDSADEYLIDYVSEHHPDCRSLLILNDSFGALSCYFSHKQLTVCSVNDSYISHQAAAYNLAENKIPAITFSQLDSLSALPEQVDLVLIKVPRTLGFLQYQLSELSEVLAPGTPVIAAAKTKDVHNSTIKAFEQFIGETKTSLAVKKSRLIISHAQGGYKAADFPVNWPLEGTDFTISNHANVFSRDSLDIGARFFFNYLPETNKAKSIIDLGCGNGVVGLMALSRCPNANITFVDESYMAVESARLNVELNMEAKYEQCSFVENDCLSGFERDSVDMVLCNPPFHQAQAVTDHIAWQMFKEAKDTLKEGGELRIIGNRHLDYHDKLNRMFGNCKLLGSNKKFVVLSATKNTGML.

The protein belongs to the methyltransferase superfamily. RlmG family.

The protein resides in the cytoplasm. The enzyme catalyses guanosine(1835) in 23S rRNA + S-adenosyl-L-methionine = N(2)-methylguanosine(1835) in 23S rRNA + S-adenosyl-L-homocysteine + H(+). Its function is as follows. Specifically methylates the guanine in position 1835 (m2G1835) of 23S rRNA. The protein is Ribosomal RNA large subunit methyltransferase G of Pseudoalteromonas translucida (strain TAC 125).